The primary structure comprises 1414 residues: Calcium-transporting ATPase 2 (1414 aa).

Disordered regions lie at residues 1–231 (MSRN…PSRL) and 265–294 (AVGT…QWRA). Topologically, residues 1–327 (MSRNNPPPVI…LLMWLAFKDK (327 aa)) are cytoplasmic. Low complexity-rich tracts occupy residues 33–53 (PTPT…PESP) and 75–96 (SPTP…SSSS). Residues 179-189 (DGDRGEDDANK) are compositionally biased toward basic and acidic residues. Residues 190–201 (KGKKDKKGKKGK) show a composition bias toward basic residues. Over residues 202-229 (KDKEEPPSAHLDPDKDKTDPTPFREKPS) the composition is skewed to basic and acidic residues. The chain crosses the membrane as a helical span at residues 328-348 (VLILLSVAAVVSLALGLYQDL). The Vacuolar portion of the chain corresponds to 349 to 370 (GTPPKIIYNDECPDGCEEAQVD). Residues 371–391 (WVEGVAIVVAIIIVVLVGSIN) traverse the membrane as a helical segment. Residues 392–541 (DWQKERQFKK…TPLQIKLNHL (150 aa)) lie on the Cytoplasmic side of the membrane. Residues 542–562 (AELIAKLGGASGLLLFIALMI) form a helical membrane-spanning segment. The Vacuolar portion of the chain corresponds to 563–585 (RFFVQLKTNPDRSANDKAQSFIQ). The helical transmembrane segment at 586-606 (ILIIAVTLVVVAVPEGLPLAV) threads the bilayer. Ca(2+)-binding residues include valine 595 and glutamate 600. The Cytoplasmic segment spans residues 607 to 1040 (TLALAFATKR…GRCVNDSVKK (434 aa)). Aspartate 642 serves as the catalytic 4-aspartylphosphate intermediate. Mg(2+) contacts are provided by aspartate 642 and threonine 644. Residues threonine 644, glutamate 737, arginine 779, 909 to 911 (TGD), arginine 958, and lysine 964 each bind ATP. Aspartate 983 contacts Mg(2+). Asparagine 986 contributes to the ATP binding site. Residues 1041–1061 (FLQFQISVNITAVFITFISAV) form a helical membrane-spanning segment. Asparagine 1049 lines the Ca(2+) pocket. The Vacuolar portion of the chain corresponds to 1062 to 1068 (ASSSEES). Residues 1069–1089 (VLTAVQLLWVNLIMDTFAALA) form a helical membrane-spanning segment. Residues asparagine 1079 and aspartate 1083 each contribute to the Ca(2+) site. The Cytoplasmic portion of the chain corresponds to 1090–1118 (LATDPATESSLDRKPDRKNAPLITVEMFK). A helical transmembrane segment spans residues 1119–1139 (MIMVQAIYQIIVCLVLHFAGL). Topologically, residues 1140-1153 (KILGLEDNDQNNTE) are vacuolar. The chain crosses the membrane as a helical span at residues 1154-1171 (LGALVFNCFVFCQIFNQL). The Cytoplasmic portion of the chain corresponds to 1172-1191 (NCRRLDRKLNVLEGFWRNWY). The helical transmembrane segment at 1192-1212 (FIIIFLIMVGGQILIVEVGGA) threads the bilayer. Glutamate 1208 lines the Ca(2+) pocket. The Vacuolar portion of the chain corresponds to 1213–1223 (AFQVTRLGGRD). The helical transmembrane segment at 1224–1244 (WGITLVIGALSLPIGALVRLT) threads the bilayer. Residues 1245-1414 (PTGPFARLLV…GLSSGDANNV (170 aa)) lie on the Cytoplasmic side of the membrane. The segment at 1376–1414 (PRTNPDDPLYAKFGLQPPESRGSSVSGAEGLSSGDANNV) is disordered.

It belongs to the cation transport ATPase (P-type) (TC 3.A.3) family.

It localises to the vacuole membrane. It carries out the reaction Ca(2+)(in) + ATP + H2O = Ca(2+)(out) + ADP + phosphate + H(+). Its function is as follows. This magnesium-dependent enzyme catalyzes the hydrolysis of ATP coupled with the transport of calcium. Transports calcium to the vacuole and participates in the control of cytosolic free calcium. The sequence is that of Calcium-transporting ATPase 2 from Cryptococcus neoformans var. grubii serotype A (strain H99 / ATCC 208821 / CBS 10515 / FGSC 9487) (Filobasidiella neoformans var. grubii).